The chain runs to 296 residues: Protoheme IX farnesyltransferase (296 aa).

The Cytoplasmic portion of the chain corresponds to 1 to 9 (MMFKQYLQV). Residues 10 to 28 (TKPGIIFGNLISVIGGFLL) form a helical membrane-spanning segment. The Periplasmic segment spans residues 29–37 (ASKGSIDYP). Residues 38–56 (LFIYTLVGVSLVVASGCVF) form a helical membrane-spanning segment. Residues 57–78 (NNYIDRDIDRKMERTKNRVLVK) are Cytoplasmic-facing. A helical membrane pass occupies residues 79 to 97 (GLISPAVSLVYATLLGIAG). At 98-107 (FMLLWFGANP) the chain is on the periplasmic side. Residues 108-126 (LACWLGVMGFVVYVGVYSL) form a helical membrane-spanning segment. Residues 127–197 (YMKRHSVYGT…YQAANIPVLP (71 aa)) lie on the Cytoplasmic side of the membrane. Residues 198–216 (VVKGISVAKNHITLYIIAF) form a helical membrane-spanning segment. The Periplasmic segment spans residues 217–228 (AVATLMLSLGGY). The chain crosses the membrane as a helical span at residues 229 to 247 (AGYKYLVVAAAVSVWWLGM). The Cytoplasmic portion of the chain corresponds to 248–268 (ALRGYKVADDRIWARKLFGFS). Residues 269 to 287 (IIAITALSVMMSVDFMVPD) form a helical membrane-spanning segment. The Periplasmic segment spans residues 288 to 296 (SHTLLAAVW).

It belongs to the UbiA prenyltransferase family. Protoheme IX farnesyltransferase subfamily.

The protein localises to the cell inner membrane. The catalysed reaction is heme b + (2E,6E)-farnesyl diphosphate + H2O = Fe(II)-heme o + diphosphate. The protein operates within porphyrin-containing compound metabolism; heme O biosynthesis; heme O from protoheme: step 1/1. Its function is as follows. Converts heme B (protoheme IX) to heme O by substitution of the vinyl group on carbon 2 of heme B porphyrin ring with a hydroxyethyl farnesyl side group. This chain is Protoheme IX farnesyltransferase, found in Escherichia coli O139:H28 (strain E24377A / ETEC).